The primary structure comprises 189 residues: NADH-quinone oxidoreductase subunit B (189 aa).

[4Fe-4S] cluster-binding residues include cysteine 39, cysteine 40, cysteine 104, and cysteine 135.

This sequence belongs to the complex I 20 kDa subunit family. In terms of assembly, NDH-1 is composed of 14 different subunits. Subunits NuoB, C, D, E, F, and G constitute the peripheral sector of the complex. It depends on [4Fe-4S] cluster as a cofactor.

The protein localises to the cell inner membrane. It carries out the reaction a quinone + NADH + 5 H(+)(in) = a quinol + NAD(+) + 4 H(+)(out). NDH-1 shuttles electrons from NADH, via FMN and iron-sulfur (Fe-S) centers, to quinones in the respiratory chain. The immediate electron acceptor for the enzyme in this species is believed to be a menaquinone. Couples the redox reaction to proton translocation (for every two electrons transferred, four hydrogen ions are translocated across the cytoplasmic membrane), and thus conserves the redox energy in a proton gradient. This is NADH-quinone oxidoreductase subunit B from Chlorobaculum tepidum (strain ATCC 49652 / DSM 12025 / NBRC 103806 / TLS) (Chlorobium tepidum).